The sequence spans 60 residues: Large ribosomal subunit protein uL30 (60 aa).

This sequence belongs to the universal ribosomal protein uL30 family. In terms of assembly, part of the 50S ribosomal subunit.

The chain is Large ribosomal subunit protein uL30 from Christiangramia forsetii (strain DSM 17595 / CGMCC 1.15422 / KT0803) (Gramella forsetii).